The sequence spans 509 residues: Maturase K (509 aa).

This sequence belongs to the intron maturase 2 family. MatK subfamily.

The protein resides in the plastid. Its subcellular location is the chloroplast. In terms of biological role, usually encoded in the trnK tRNA gene intron. Probably assists in splicing its own and other chloroplast group II introns. The polypeptide is Maturase K (Stylosanthes hamata (Caribbean stylo)).